Consider the following 1066-residue polypeptide: Protein sts5 (1066 aa).

Over residues 18 to 28 (QQDPSDAQSSP) the composition is skewed to low complexity. 3 disordered regions span residues 18–40 (QQDP…SLTT), 154–178 (ATST…SPNS), and 247–286 (SNFR…RKNL). A compositionally biased stretch (polar residues) spans 29–40 (TFVPSANPSLTT). Thr-157 carries the phosphothreonine modification. A compositionally biased stretch (low complexity) spans 168–178 (HSVASVSSPNS). Thr-262 carries the post-translational modification Phosphothreonine. A Phosphoserine modification is found at Ser-264. Residues 270-280 (SGSGFSSGGSG) are compositionally biased toward gly residues. Thr-377 carries the post-translational modification Phosphothreonine. Positions 454 to 480 (SSAANKERQTSSGNQGSSNNSGNDKPK) are disordered. Residues 464-476 (SSGNQGSSNNSGN) show a composition bias toward low complexity. Residues 482-556 (VWFKPSDKRV…AQVSALLHDT (75 aa)) enclose the CSD2 domain. The RNB domain maps to 618 to 934 (NINSSSATDF…VHYQLQLLLR (317 aa)). The DIS3L2 C-terminal domain maps to 983-1033 (QDGLVCFVAPSYFDVFFPSLGMEKRVHLDLLNLTHVRFEEDQGILSLYDES).

Belongs to the RNR ribonuclease family. In terms of assembly, interacts with serine/threonine phosphatase ppe1, protein kinase C and an osmosensing MAP kinase.

It localises to the cytoplasm. Functionally, required for the maintenance of cell shape during interphase. Required for localization of cortical actin to the growing tips before mitosis. This is Protein sts5 (sts5) from Schizosaccharomyces pombe (strain 972 / ATCC 24843) (Fission yeast).